The primary structure comprises 103 residues: Small ribosomal subunit protein uS10 (103 aa).

It belongs to the universal ribosomal protein uS10 family. As to quaternary structure, part of the 30S ribosomal subunit.

In terms of biological role, involved in the binding of tRNA to the ribosomes. The protein is Small ribosomal subunit protein uS10 of Idiomarina loihiensis (strain ATCC BAA-735 / DSM 15497 / L2-TR).